We begin with the raw amino-acid sequence, 2449 residues long: Nonribisomal peptide synthetase phqB (2449 aa).

Residues isoleucine 253–arginine 654 form an adenylation 1 region. The region spanning leucine 795–proline 870 is the Carrier 1 domain. Position 815 is an O-(pantetheine 4'-phosphoryl)serine (serine 815). The segment at glutamine 913–leucine 1337 is condensation 1. Residues glutamate 1357–glutamine 1756 form an adenylation 2 region. The region spanning tryptophan 1915–proline 1993 is the Carrier 2 domain. At serine 1952 the chain carries O-(pantetheine 4'-phosphoryl)serine. Positions leucine 2041 to leucine 2297 are reductase (R) domain. NADPH-binding residues include threonine 2045, methionine 2249, and asparagine 2259.

Belongs to the NRP synthetase family.

Its pathway is alkaloid biosynthesis. Its function is as follows. Nonribisomal peptide synthetase; part of the gene cluster that mediates the biosynthesis of paraherquamide, a fungal indole alkaloid that belongs to a family of natural products containing a characteristic bicyclo[2.2.2]diazaoctane core. The first steps in the biosynthesis of paraherquamide is the production of the beta-methyl-proline precursor from L-isoleucine. They require oxidation of a terminally hydroxylated L-isoleucine to the corresponding aldehyde by enzymes which have still to be identified. Spontaneous cyclization and dehydration would yield the 4-methyl pyrolline-5-carboxylic acid, which is then reduced by the pyrroline-5-carboxylate reductase phqD leading to the beta-methyl-proline precursor. The next step of paraherquamide biosynthesis involves coupling of beta-methyl-proline and L-tryptophan by the bimodular NRPS phqB, to produce a monooxopiperazine intermediate. The reductase (R) domain of phqB utilizes NADPH for hydride transfer to reduce the thioester bond of the T domain-tethered linear dipeptide to a hemithioaminal intermediate, which spontaneously cleaves the C-S bond to release the aldehyde product. This compound undergoes spontaneous cyclization and dehydration to give a dienamine which is reverse prenylated at C-2 by the reverse prenyltransferase phqJ. The other prenyltransferase present in the cluster, phqI may be a redundant gene in the pathway. During biosynthetic assembly, the key step to produce the polycyclic core is catalyzed by the bifunctional reductase and intramolecular [4+2] Diels-Alderase, phqE, resulting in formation of the [2.2.2] diazaoctane intermediate preparaherquamide. Following formation of preparaherquamide, an indole 2,3-epoxidation-initiated pinacol-like rearrangement is catalyzed by the phqK FAD-dependent monooxygenase. The prenyltransferase phqA, the cytochrome P450 monooxygenase phqL, and the FAD-linked oxidoreductase phqH (or the cytochrome P450 monooxygenase phqM), are proposed to be involved in the formation of the pyran ring. The FAD-dependent monooxygenase phqK is likely responsible for generation of the spiro-oxindole, and the N-methylation is likely mediated by the phqN methyltransferase leading to the isolable natural product paraherquamide F. However, the order of these biosynthetic steps has still to be determined. In late-stage paraherquamide biosynthesis, the third P450 monooxygenase, phqO, is probably responsible for the C-14 hydroxylation, transforming paraherquamide F to paraherquamide G, and paraherquamide E to the final product paraherquamide A. The expansion from the 6-membered ring pyran (in paraherquamides F and G) to the 7-membered dioxepin ring (in paraherquamides A and E) represents a poorly understood but intriguing process that probably involves the 2-oxoglutarate-dependent dioxygenase phqC. Finally, the remaining members of the paraherquamide cluster, including phqI as well as phqM (or phqH), do not have a clearly prescribed role and appear to be redundant. The protein is Nonribisomal peptide synthetase phqB of Penicillium fellutanum.